Here is a 642-residue protein sequence, read N- to C-terminus: Cylicin-1 (642 aa).

2 disordered regions span residues 167–203 (NGEPEILGNTEKNPSKSSHKIKLPKTSNSTSETNLEY) and 284–607 (NCSQ…CEPF). Positions 191 to 203 (KTSNSTSETNLEY) are enriched in polar residues. 8 repeat units span residues 294 to 313 (LKTGGKKERDSDIDSGGSKD), 314 to 344 (AKKEGKKKGKRESRKKRNTESSDAESGDSKD), 345 to 391 (GKKK…KKST), 392 to 432 (GSTG…SSKK), 433 to 464 (SKKDEKKENKGRKKKPIKDTESTDADSESEGD), 465 to 500 (STGKKNEKKDKKITKKGEKKDAKKNTASSESESDLG), 501 to 526 (VNKKKTKIKEIVSFSDSTSDSYSKAG), and 527 to 543 (RRKNVRRSDSESEDSSG). Positions 298–316 (GKKERDSDIDSGGSKDAKK) are enriched in basic and acidic residues. Positions 317 to 330 (EGKKKGKRESRKKR) are enriched in basic residues. Positions 353–364 (KKNEIKKKKDTD) are enriched in basic and acidic residues. A compositionally biased stretch (low complexity) spans 388–404 (KKSTGSTGSESVDSKST). The span at 405-416 (NKVKKQVKKGVM) shows a compositional bias: basic residues. A compositionally biased stretch (basic and acidic residues) spans 428–440 (ASSKKSKKDEKKE). Acidic residues predominate over residues 454 to 463 (STDADSESEG). Residues 465–488 (STGKKNEKKDKKITKKGEKKDAKK) show a composition bias toward basic and acidic residues. Residues 513–523 (SFSDSTSDSYS) show a composition bias toward low complexity. The tract at residues 527–543 (RRKNVRRSDSESEDSSG) is 8 X approximate tandem repeats.

In terms of assembly, interacts with proteins of spermatozoa head including ACTL7A, CCIN, FAM209 and SPACA1; the interactions may be necessary for proper acrosome attachment to the nuclear envelope. As to expression, testis.

Its subcellular location is the cytoplasm. The protein localises to the cytoskeleton. It is found in the perinuclear theca. The protein resides in the calyx. Its function is as follows. Plays a role in the establishment of normal sperm morphology during spermatogenesis and is required for acrosome attachment to the nuclear envelope. The polypeptide is Cylicin-1 (Mus musculus (Mouse)).